The sequence spans 481 residues: Glycogen synthase (481 aa).

An ADP-alpha-D-glucose-binding site is contributed by Lys-15.

Belongs to the glycosyltransferase 1 family. Bacterial/plant glycogen synthase subfamily.

The enzyme catalyses [(1-&gt;4)-alpha-D-glucosyl](n) + ADP-alpha-D-glucose = [(1-&gt;4)-alpha-D-glucosyl](n+1) + ADP + H(+). It functions in the pathway glycan biosynthesis; glycogen biosynthesis. Its function is as follows. Synthesizes alpha-1,4-glucan chains using ADP-glucose. The protein is Glycogen synthase of Mesorhizobium japonicum (strain LMG 29417 / CECT 9101 / MAFF 303099) (Mesorhizobium loti (strain MAFF 303099)).